Reading from the N-terminus, the 219-residue chain is Protein ERP1 (219 aa).

The signal sequence occupies residues 1–22 (MLLTSLLQVFACCLVLPAQVTA). The Lumenal segment spans residues 23–186 (FYYYTSGAER…RDASEAVNSR (164 aa)). One can recognise a GOLD domain in the interval 32 to 131 (RKCFHKELSK…KTKIDVEFQV (100 aa)). The chain crosses the membrane as a helical span at residues 187 to 207 (AMWWIVIQLIVLAVTCGWQMK). Residues 208 to 219 (HLGKFFVKQKIL) lie on the Cytoplasmic side of the membrane.

This sequence belongs to the EMP24/GP25L family. Associates with EMP24, ERV25 and ERP2.

It is found in the endoplasmic reticulum membrane. Involved in vesicular protein trafficking. The protein is Protein ERP1 (ERP1) of Saccharomyces cerevisiae (strain ATCC 204508 / S288c) (Baker's yeast).